The chain runs to 397 residues: Serpin B10 (397 aa).

Cys-68 and Cys-395 are joined by a disulfide. The Nuclear localization signal motif lies at Lys-74–Lys-77.

The protein belongs to the serpin family. Ov-serpin subfamily. In terms of tissue distribution, expressed specifically in myeloid cells and the bone marrow.

The protein localises to the nucleus. Its subcellular location is the cytoplasm. Functionally, protease inhibitor that may play a role in the regulation of protease activities during hematopoiesis and apoptosis induced by TNF. May regulate protease activities in the cytoplasm and in the nucleus. This Homo sapiens (Human) protein is Serpin B10 (SERPINB10).